Here is a 250-residue protein sequence, read N- to C-terminus: 4-hydroxy-tetrahydrodipicolinate reductase (250 aa).

Residues 10–15 (GARGRI), 78–80 (GTT), and 105–108 (APNF) each bind NAD(+). The Proton donor/acceptor role is filled by His135. His136 provides a ligand contact to (S)-2,3,4,5-tetrahydrodipicolinate. Catalysis depends on Lys139, which acts as the Proton donor. 145–146 (GT) contacts (S)-2,3,4,5-tetrahydrodipicolinate. The interval 158-177 (RAEAGSAPQPDATTTALDGA) is disordered.

It belongs to the DapB family.

Its subcellular location is the cytoplasm. The catalysed reaction is (S)-2,3,4,5-tetrahydrodipicolinate + NAD(+) + H2O = (2S,4S)-4-hydroxy-2,3,4,5-tetrahydrodipicolinate + NADH + H(+). The enzyme catalyses (S)-2,3,4,5-tetrahydrodipicolinate + NADP(+) + H2O = (2S,4S)-4-hydroxy-2,3,4,5-tetrahydrodipicolinate + NADPH + H(+). The protein operates within amino-acid biosynthesis; L-lysine biosynthesis via DAP pathway; (S)-tetrahydrodipicolinate from L-aspartate: step 4/4. Its function is as follows. Catalyzes the conversion of 4-hydroxy-tetrahydrodipicolinate (HTPA) to tetrahydrodipicolinate. This Streptomyces griseus subsp. griseus (strain JCM 4626 / CBS 651.72 / NBRC 13350 / KCC S-0626 / ISP 5235) protein is 4-hydroxy-tetrahydrodipicolinate reductase.